The primary structure comprises 513 residues: Proline-rich receptor-like protein kinase PERK3 (513 aa).

The Extracellular segment spans residues 1–123; the sequence is MARSNRCVPQ…SPPSPSRLST (123 aa). Residue asparagine 11 is glycosylated (N-linked (GlcNAc...) asparagine). The segment covering 27 to 36 has biased composition (polar residues); that stretch reads LKSRWQQITM. The disordered stretch occupies residues 27–119; the sequence is LKSRWQQITM…GFSLSPPSPS (93 aa). N-linked (GlcNAc...) asparagine glycosylation is present at asparagine 66. A compositionally biased stretch (low complexity) spans 78 to 89; that stretch reads PSTSTPPRLGNR. A compositionally biased stretch (polar residues) spans 99–111; sequence GQEPTTPTMTPGF. Residues 124–144 traverse the membrane as a helical segment; that stretch reads GAVVGISIGGGVFVLTLIFFL. Residues 145 to 513 lie on the Cytoplasmic side of the membrane; the sequence is CKKKRPRDDK…TAQRYGGDSL (369 aa). Phosphothreonine is present on threonine 172. A Protein kinase domain is found at 183 to 334; sequence FSEANLLGEG…DFGLAKIALD (152 aa). ATP contacts are provided by residues 189 to 197 and lysine 211; that span reads LGEGGFGFV. At tyrosine 256 the chain carries Phosphotyrosine. Residue aspartate 307 is the Proton acceptor of the active site. Position 340 is a phosphoserine (serine 340). Residues threonine 341 and threonine 346 each carry the phosphothreonine modification. Residue tyrosine 354 is modified to Phosphotyrosine.

The protein belongs to the protein kinase superfamily. Ser/Thr protein kinase family. As to expression, expressed at low levels in inflorescence bolt, flower buds, siliques, roots, seedlings and leaves.

It localises to the cell membrane. It catalyses the reaction L-seryl-[protein] + ATP = O-phospho-L-seryl-[protein] + ADP + H(+). The enzyme catalyses L-threonyl-[protein] + ATP = O-phospho-L-threonyl-[protein] + ADP + H(+). The chain is Proline-rich receptor-like protein kinase PERK3 (PERK3) from Arabidopsis thaliana (Mouse-ear cress).